Here is a 419-residue protein sequence, read N- to C-terminus: Homeobox-containing protein 1 (419 aa).

Residues 18-49 (DEPRFTIEQIDLLQRLRRTGMTKHEILHALET) enclose the HNF-p1 domain. A disordered region spans residues 56 to 152 (EHSDKFGRRS…GQRSYSFEAS (97 aa)). A Glycyl lysine isopeptide (Lys-Gly) (interchain with G-Cter in SUMO2) cross-link involves residue Lys-60. 2 stretches are compositionally biased toward low complexity: residues 64–73 (RSSYGGSSYG) and 81–93 (ASSS…TQTQ). Positions 94–132 (HSGMSPSPSNSYDTSPLPCTTNQNGRENNDRLSTSNGKM) are enriched in polar residues. A Glycyl lysine isopeptide (Lys-Gly) (interchain with G-Cter in SUMO2) cross-link involves residue Lys-131. In terms of domain architecture, POU-specific atypical spans 145–241 (RSYSFEASEE…PGATLSMRPA (97 aa)). Ser-148 is modified (phosphoserine). Residue Lys-161 forms a Glycyl lysine isopeptide (Lys-Gly) (interchain with G-Cter in SUMO2) linkage. Ser-170 carries the post-translational modification Phosphoserine. Residues Lys-174, Lys-217, and Lys-310 each participate in a glycyl lysine isopeptide (Lys-Gly) (interchain with G-Cter in SUMO2) cross-link. The segment at residues 267 to 341 (RRGSRFTWRK…NRRKEIKRRA (75 aa)) is a DNA-binding region (homeobox). Residues 352–384 (IDVQSPGGHSNSDDVDGNDYSEQDDSTSHSDHQ) form a disordered region. The segment covering 364–376 (DDVDGNDYSEQDD) has biased composition (acidic residues). Lys-412 is covalently cross-linked (Glycyl lysine isopeptide (Lys-Gly) (interchain with G-Cter in SUMO1); alternate). Lys-412 participates in a covalent cross-link: Glycyl lysine isopeptide (Lys-Gly) (interchain with G-Cter in SUMO2); alternate.

In terms of assembly, associates with the telomerase holoenzyme complex. Interacts with DKC1, XRCC6 and COIL.

It localises to the nucleus. The protein resides in the cytoplasm. Its subcellular location is the chromosome. The protein localises to the telomere. It is found in the cajal body. It localises to the PML body. Its function is as follows. Binds directly to 5'-TTAGGG-3' repeats in telomeric DNA. Associates with the telomerase complex at sites of active telomere processing and positively regulates telomere elongation. Important for TERT binding to chromatin, indicating a role in recruitment of the telomerase complex to telomeres. Also plays a role in the alternative lengthening of telomeres (ALT) pathway in telomerase-negative cells where it promotes formation and/or maintenance of ALT-associated promyelocytic leukemia bodies (APBs). Enhances formation of telomere C-circles in ALT cells, suggesting a possible role in telomere recombination. Might also be involved in the DNA damage response at telomeres. The protein is Homeobox-containing protein 1 (Hmbox1) of Mus musculus (Mouse).